The sequence spans 670 residues: Solute carrier organic anion transporter family member 1A6 (670 aa).

The Cytoplasmic portion of the chain corresponds to 1-20; sequence MGEPEKRAGTHGIRCFAKIK. Residues 21–40 traverse the membrane as a helical segment; it reads VFLLALTWAYASKALSATYM. Over 41-59 the chain is Extracellular; sequence NSMLTQIERRFNISTSIVG. The N-linked (GlcNAc...) asparagine glycan is linked to asparagine 52. Residues 60 to 80 traverse the membrane as a helical segment; the sequence is LINGSFEVGNLLLIIFVSYFG. At 81 to 86 the chain is on the cytoplasmic side; the sequence is RKRHRP. The chain crosses the membrane as a helical span at residues 87 to 111; it reads IMIGIGCAVMGLGCFIISLPHFLMG. Topologically, residues 112 to 155 are extracellular; that stretch reads RYEYETTISPTSNLSSNSFLCMENRTQTLKPTQDPAECVKEMKS. N-linked (GlcNAc...) asparagine glycans are attached at residues asparagine 124 and asparagine 135. The chain crosses the membrane as a helical span at residues 156–184; sequence LMWIYVLVGNIIRGIGETPIMPLGISYIE. Residues 185–203 lie on the Cytoplasmic side of the membrane; it reads DFAKSENSPFYIGILEVGK. A helical transmembrane segment spans residues 204-224; that stretch reads ITGPIAAIWLGSFCATIYVDM. At 225–242 the chain is on the extracellular side; that stretch reads GSVNTDDLTITPTDTRCV. A helical transmembrane segment spans residues 243–267; that stretch reads GAWWIGFLVCAGLNILISIPFFFFP. The Cytoplasmic portion of the chain corresponds to 268–311; the sequence is KTFPKEGPEDMANETKNDEGDKHREKAKEEKRGITKDFFLFMKS. The tract at residues 276–295 is disordered; that stretch reads EDMANETKNDEGDKHREKAK. The helical transmembrane segment at 312–333 threads the bilayer; the sequence is LSCNPIYMLCVLTSVLQVNGFV. At 334–353 the chain is on the extracellular side; that stretch reads SIFTFKPKYLEHHYGKSSSE. Residues 354–377 form a helical membrane-spanning segment; sequence AIFLMGLYTLPSVCVGYLISGFIM. Topologically, residues 378–381 are cytoplasmic; it reads KKFK. A helical transmembrane segment spans residues 382–405; that stretch reads ITLKKAAFISYCLGMSECLLSLCN. Topologically, residues 406–513 are extracellular; the sequence is FMLTCDNVPI…PDCANKLQYF (108 aa). The Kazal-like domain maps to 433 to 488; it reads NTVLADCNTRCSCLTKTWDPVCGDNGLAYITPCLAGCEKSVGSGINMVLQDCSCIQ. 3 disulfide bridges follow: cysteine 439–cysteine 469, cysteine 445–cysteine 465, and cysteine 454–cysteine 486. An N-linked (GlcNAc...) asparagine glycan is attached at asparagine 492. The helical transmembrane segment at 514–536 threads the bilayer; it reads LIITVFCSFFYSLSLIPGYMIFL. Over 537 to 545 the chain is Cytoplasmic; that stretch reads RCMKSEEKS. The helical transmembrane segment at 546-571 threads the bilayer; the sequence is LGIGLQAFCMRILGGILAPIYFGVLI. Residues 572 to 605 are Extracellular-facing; the sequence is DRTCLHWGTQKCGEPGACRTYEINSFRSIYLGLP. The helical transmembrane segment at 606–623 threads the bilayer; the sequence is AALRGSSYLPAFFILRLM. Over 624-670 the chain is Cytoplasmic; the sequence is RKFQFPGDINSPVTDHVEMMLTEKESEHTDVHRSPQVENDGELKTKL. Serine 634 carries the phosphoserine modification. The tract at residues 647–670 is disordered; sequence KESEHTDVHRSPQVENDGELKTKL.

This sequence belongs to the organo anion transporter (TC 2.A.60) family.

The protein resides in the cell membrane. May mediate the Na(+)-independent transport of organic anions. The sequence is that of Solute carrier organic anion transporter family member 1A6 (Slco1a6) from Rattus norvegicus (Rat).